Consider the following 127-residue polypeptide: UPF0102 protein Reut_A3265 (127 aa).

Belongs to the UPF0102 family.

The sequence is that of UPF0102 protein Reut_A3265 from Cupriavidus pinatubonensis (strain JMP 134 / LMG 1197) (Cupriavidus necator (strain JMP 134)).